The following is a 637-amino-acid chain: tRNA uridine 5-carboxymethylaminomethyl modification enzyme MnmG (637 aa).

Residue 18-23 participates in FAD binding; the sequence is GAGHAG. 281-295 contributes to the NAD(+) binding site; that stretch reads GPRYCPSIEDKIVRF.

Belongs to the MnmG family. As to quaternary structure, homodimer. Heterotetramer of two MnmE and two MnmG subunits. FAD is required as a cofactor.

The protein resides in the cytoplasm. Its function is as follows. NAD-binding protein involved in the addition of a carboxymethylaminomethyl (cmnm) group at the wobble position (U34) of certain tRNAs, forming tRNA-cmnm(5)s(2)U34. In Ligilactobacillus salivarius (strain UCC118) (Lactobacillus salivarius), this protein is tRNA uridine 5-carboxymethylaminomethyl modification enzyme MnmG.